The following is a 322-amino-acid chain: Probable heme-iron transport system permease protein IsdF (322 aa).

9 consecutive transmembrane segments (helical) span residues 9 to 29 (LLFLCLLVILIATAYISFVTG), 61 to 81 (ILIALMVGAMLAVSGALLQAA), 89 to 109 (ANIIGVSSGALIMRALCMLFI), 114 to 134 (FYLPLLSFIGGLIPFLIIILL), 143 to 163 (VSMILVGVALFVLLNGVLEIL), 179 to 199 (IWSDVYILAVSALLGLILTLL), 233 to 253 (VFLASATVAIVGQLAFLGIIV), 267 to 287 (VLIPFSTVIGAWLLLVADLLG), and 294 to 314 (LEIPANAILMIVGGPMLIYLI).

It belongs to the binding-protein-dependent transport system permease family. FecCD subfamily.

It is found in the cell membrane. Part of the binding-protein-dependent transport system for heme-iron. Responsible for the translocation of the substrate across the membrane. The polypeptide is Probable heme-iron transport system permease protein IsdF (isdF) (Staphylococcus aureus (strain MSSA476)).